Reading from the N-terminus, the 200-residue chain is Lipopolysaccharide core heptose(II)-phosphate phosphatase (200 aa).

An N-terminal signal peptide occupies residues 1–25 (MLAFCRSSLKSKKYFIILLALAAIA).

The protein belongs to the phosphoglycerate mutase family. Ais subfamily.

Its subcellular location is the periplasm. It functions in the pathway bacterial outer membrane biogenesis; lipopolysaccharide metabolism. Catalyzes the dephosphorylation of heptose(II) of the outer membrane lipopolysaccharide core. This chain is Lipopolysaccharide core heptose(II)-phosphate phosphatase, found in Escherichia coli O9:H4 (strain HS).